The sequence spans 163 residues: Peptide deformylase 3 (163 aa).

Positions 91 and 133 each coordinate Fe cation. The active site involves Glu-134. His-137 lines the Fe cation pocket.

The protein belongs to the polypeptide deformylase family. The cofactor is Fe(2+).

The enzyme catalyses N-terminal N-formyl-L-methionyl-[peptide] + H2O = N-terminal L-methionyl-[peptide] + formate. Removes the formyl group from the N-terminal Met of newly synthesized proteins. Requires at least a dipeptide for an efficient rate of reaction. N-terminal L-methionine is a prerequisite for activity but the enzyme has broad specificity at other positions. The chain is Peptide deformylase 3 from Shewanella oneidensis (strain ATCC 700550 / JCM 31522 / CIP 106686 / LMG 19005 / NCIMB 14063 / MR-1).